A 243-amino-acid polypeptide reads, in one-letter code: 4-hydroxy-tetrahydrodipicolinate reductase (243 aa).

Residues glycine 9–methionine 14, glycine 78–serine 80, and alanine 104–phenylalanine 107 each bind NAD(+). The Proton donor/acceptor role is filled by histidine 134. Position 135 (histidine 135) interacts with (S)-2,3,4,5-tetrahydrodipicolinate. Lysine 138 functions as the Proton donor in the catalytic mechanism. Position 144–145 (glycine 144–threonine 145) interacts with (S)-2,3,4,5-tetrahydrodipicolinate.

Belongs to the DapB family.

The protein localises to the cytoplasm. The enzyme catalyses (S)-2,3,4,5-tetrahydrodipicolinate + NAD(+) + H2O = (2S,4S)-4-hydroxy-2,3,4,5-tetrahydrodipicolinate + NADH + H(+). The catalysed reaction is (S)-2,3,4,5-tetrahydrodipicolinate + NADP(+) + H2O = (2S,4S)-4-hydroxy-2,3,4,5-tetrahydrodipicolinate + NADPH + H(+). The protein operates within amino-acid biosynthesis; L-lysine biosynthesis via DAP pathway; (S)-tetrahydrodipicolinate from L-aspartate: step 4/4. In terms of biological role, catalyzes the conversion of 4-hydroxy-tetrahydrodipicolinate (HTPA) to tetrahydrodipicolinate. In Legionella pneumophila (strain Corby), this protein is 4-hydroxy-tetrahydrodipicolinate reductase.